Consider the following 431-residue polypeptide: Adenylosuccinate synthetase (431 aa).

GTP contacts are provided by residues 13-19 and 41-43; these read GDEGKGK and GHT. The active-site Proton acceptor is the D14. Mg(2+)-binding residues include D14 and G41. Residues 14-17, 39-42, T130, R144, Q225, T240, and R304 each bind IMP; these read DEGK and NAGH. Catalysis depends on H42, which acts as the Proton donor. 300-306 lines the substrate pocket; sequence ATTGRQR. GTP-binding positions include R306, 332 to 334, and 414 to 416; these read KLD and STG.

Belongs to the adenylosuccinate synthetase family. Homodimer. The cofactor is Mg(2+).

The protein resides in the cytoplasm. It carries out the reaction IMP + L-aspartate + GTP = N(6)-(1,2-dicarboxyethyl)-AMP + GDP + phosphate + 2 H(+). The protein operates within purine metabolism; AMP biosynthesis via de novo pathway; AMP from IMP: step 1/2. Its function is as follows. Plays an important role in the de novo pathway of purine nucleotide biosynthesis. Catalyzes the first committed step in the biosynthesis of AMP from IMP. The polypeptide is Adenylosuccinate synthetase (Saccharophagus degradans (strain 2-40 / ATCC 43961 / DSM 17024)).